A 937-amino-acid polypeptide reads, in one-letter code: Diacylglycerol kinase theta (937 aa).

The interval 1–48 is disordered; it reads MATAAESGARTWPGSGSPRLGSPAGSPVLGISGRARPGSGPERTGRAI. Phosphoserine occurs at positions 22 and 26. 3 consecutive Phorbol-ester/DAG-type zinc fingers follow at residues 54–102, 115–162, and 177–228; these read GHSF…KTPC, AHCF…CSDC, and HHHW…TPEC. A disordered region spans residues 359–378; sequence GKAGTTEEETSKDSGPGDSV. The Ras-associating domain occupies 390 to 489; that stretch reads TQEILKIYPD…TRFYVAEARA (100 aa). 2 consecutive short sequence motifs (LXXLL motif) follow at residues 550-554 and 569-573; these read LYMLA and LPDVL. The region spanning 579 to 716 is the DAGKc domain; the sequence is PDCCPLLVFV…MDRWTILLDA (138 aa). Residues 911–937 form a disordered region; it reads AKQKPRKAGAIRDTRVDTLPAPEGNPL.

It belongs to the eukaryotic diacylglycerol kinase family. In terms of assembly, interacts with RHOA (constitutively activated, GTP-bound); the interaction inhibits DGKQ. Interacts with PRKCE. Interacts with PRKCH. Interacts with PLCB1. Interacts with NR5A1; the interaction requires both LXXLL motifs in DGKQ and is required for full phosphatidic acid-mediated activation of NR5A1. Phosphorylated by PRKCE and PRKCH in vitro. As to expression, widely expressed with higher expression in the brain and, to a lesser extent, in the small intestine, duodenum, and liver. In brain, expressed in gray matter. Expression is most intense in the cerebellar cortex and hippocampus, while moderate expression is seen in the olfactory bulb neuronal layers and brain stem nuclei. In the cerebellar cortex, equally expressed in both the Purkinje cell somata and the granule cells.

The protein resides in the cytoplasm. The protein localises to the cytosol. It is found in the cell membrane. It localises to the synapse. Its subcellular location is the cytoskeleton. The protein resides in the nucleus. The protein localises to the nucleus speckle. It is found in the nucleus matrix. The catalysed reaction is a 1,2-diacyl-sn-glycerol + ATP = a 1,2-diacyl-sn-glycero-3-phosphate + ADP + H(+). The enzyme catalyses a 1-O-alkyl-sn-glycerol + ATP = a 1-O-alkyl-sn-glycero-3-phosphate + ADP + H(+). It carries out the reaction 1-O-alkyl-2-acyl-sn-glycerol + ATP = 1-O-alkyl-2-acyl-sn-glycero-3-phosphate + ADP + H(+). It catalyses the reaction 1,2-di-(9Z-octadecenoyl)-sn-glycerol + ATP = 1,2-di-(9Z-octadecenoyl)-sn-glycero-3-phosphate + ADP + H(+). The catalysed reaction is 1-O-hexadecyl-sn-glycerol + ATP = 1-O-hexadecyl-sn-glycero-3-phosphate + ADP + H(+). The enzyme catalyses 1-O-hexadecyl-2-acetyl-sn-glycerol + ATP = 1-O-hexadecyl-2-acetyl-sn-glycero-3-phosphate + ADP + H(+). It carries out the reaction 1-octadecanoyl-2-(5Z,8Z,11Z,14Z-eicosatetraenoyl)-sn-glycerol + ATP = 1-octadecanoyl-2-(5Z,8Z,11Z,14Z-eicosatetraenoyl)-sn-glycero-3-phosphate + ADP + H(+). It functions in the pathway lipid metabolism; glycerolipid metabolism. Its activity is regulated as follows. Activated by phosphatidylserine. Its function is as follows. Diacylglycerol kinase that converts diacylglycerol/DAG into phosphatidic acid/phosphatidate/PA and regulates the respective levels of these two bioactive lipids. Thereby, acts as a central switch between the signaling pathways activated by these second messengers with different cellular targets and opposite effects in numerous biological processes. Within the adrenocorticotropic hormone signaling pathway, produces phosphatidic acid which in turn activates NR5A1 and subsequent steroidogenic gene transcription. Also functions downstream of the nerve growth factor signaling pathway being specifically activated in the nucleus by the growth factor. Through its diacylglycerol activity also regulates synaptic vesicle endocytosis. The chain is Diacylglycerol kinase theta from Rattus norvegicus (Rat).